A 402-amino-acid polypeptide reads, in one-letter code: C2H2 finger domain transcription factor CON7 (402 aa).

The interval 1–247 is disordered; sequence MLASSRQPRH…GAQQHKRPRR (247 aa). Composition is skewed to polar residues over residues 19 to 49 and 72 to 86; these read LSSSTLHRSGSPQTGTLRQDATTPTLATSVG and CGDNQSEAQSVTVDT. Residues 87–98 show a composition bias toward low complexity; sequence SSAAQYNASAQQ. 2 stretches are compositionally biased toward polar residues: residues 99–116 and 125–151; these read EVRSNNPGNYSASATPTS and ARSSSFPDHLQQRSYHPASNHSGSSGD. A C2H2-type zinc finger spans residues 256-282; that stretch reads YKCGWQGCEKAYGTLNHLNAHVTMQSH. The stretch at 289–323 forms a coiled coil; the sequence is EEFKEIRKEWKARKKEEEAARKADEERQRQAAQSQ. The segment covering 302–317 has biased composition (basic and acidic residues); that stretch reads KKEEEAARKADEERQR. Positions 302–402 are disordered; sequence KKEEEAARKA…GSNQAMYNQR (101 aa). Composition is skewed to polar residues over residues 322–341, 363–373, and 392–402; these read SQGGSTEGQAGSDVSQSSNG, AATSTSVQQQP, and GGSNQAMYNQR.

It is found in the nucleus. Its function is as follows. Transcription factor that plays a central role in appressorium formation and pathogenicity. Required for the expression of a large set of genes including factors that might play a role in membrane metabolism and ergosterol biosynthesis, the chitin-binding protein CBP1,as well as CHS7 that is essential for normal pathogenic development. This chain is C2H2 finger domain transcription factor CON7, found in Pyricularia oryzae (strain 70-15 / ATCC MYA-4617 / FGSC 8958) (Rice blast fungus).